A 531-amino-acid polypeptide reads, in one-letter code: Acetate CoA-transferase YdiF (531 aa).

The 5-glutamyl coenzyme A thioester intermediate role is filled by Glu-333.

The protein belongs to the 3-oxoacid CoA-transferase family. In terms of assembly, homotetramer; dimer of dimers.

It carries out the reaction an acyl-CoA + acetate = a carboxylate + acetyl-CoA. CoA transferase having broad substrate specificity for short-chain acyl-CoA thioesters with the activity decreasing when the length of the carboxylic acid chain exceeds four carbons. Exhibits high activity with acetoacetyl-CoA, propionyl-CoA, crotonoyl-CoA or butyryl-CoA as donors, with acetate as an acceptor. When acetyl-CoA is used as the donor, propionate, acetoacetate, butyrate, isobutyrate, and 4-hydroxybutyrate can be utilized as acceptors but not isovalerate. May play a role in short-chain fatty acid metabolism in E.coli. The protein is Acetate CoA-transferase YdiF of Escherichia coli O157:H7.